Consider the following 184-residue polypeptide: Peptidyl-tRNA hydrolase (184 aa).

TRNA is bound at residue Tyr14. His19 acts as the Proton acceptor in catalysis. Residues Phe60 and Asn62 each contribute to the tRNA site.

This sequence belongs to the PTH family. As to quaternary structure, monomer.

The protein resides in the cytoplasm. The catalysed reaction is an N-acyl-L-alpha-aminoacyl-tRNA + H2O = an N-acyl-L-amino acid + a tRNA + H(+). In terms of biological role, hydrolyzes ribosome-free peptidyl-tRNAs (with 1 or more amino acids incorporated), which drop off the ribosome during protein synthesis, or as a result of ribosome stalling. Its function is as follows. Catalyzes the release of premature peptidyl moieties from peptidyl-tRNA molecules trapped in stalled 50S ribosomal subunits, and thus maintains levels of free tRNAs and 50S ribosomes. This chain is Peptidyl-tRNA hydrolase, found in Mesomycoplasma hyopneumoniae (strain 232) (Mycoplasma hyopneumoniae).